The following is a 457-amino-acid chain: Cysteine--tRNA ligase (457 aa).

Cys-28 provides a ligand contact to Zn(2+). The 'HIGH' region signature appears at 30 to 40; that stretch reads ITVYDLCHIGH. Zn(2+) contacts are provided by Cys-209, His-234, and Glu-238. The 'KMSKS' region signature appears at 266–270; that stretch reads KMSKS. An ATP-binding site is contributed by Lys-269.

This sequence belongs to the class-I aminoacyl-tRNA synthetase family. In terms of assembly, monomer. The cofactor is Zn(2+).

Its subcellular location is the cytoplasm. It catalyses the reaction tRNA(Cys) + L-cysteine + ATP = L-cysteinyl-tRNA(Cys) + AMP + diphosphate. The polypeptide is Cysteine--tRNA ligase (Sodalis glossinidius (strain morsitans)).